Consider the following 148-residue polypeptide: MDIIIENRKVRFNYFIIQEFDAGIVLIGSEVKSLRQRKVSIAESYVTERNMELWLCNLHISEYTQANTKNHNPTRPRKLLLKKKQIYKISGNMKNDGFTVVPLFLYFNDKGIAKAKIVIVKGKKLHDKRETIKARDWNREKNRILRGG.

The protein belongs to the SmpB family.

The protein localises to the cytoplasm. Its function is as follows. Required for rescue of stalled ribosomes mediated by trans-translation. Binds to transfer-messenger RNA (tmRNA), required for stable association of tmRNA with ribosomes. tmRNA and SmpB together mimic tRNA shape, replacing the anticodon stem-loop with SmpB. tmRNA is encoded by the ssrA gene; the 2 termini fold to resemble tRNA(Ala) and it encodes a 'tag peptide', a short internal open reading frame. During trans-translation Ala-aminoacylated tmRNA acts like a tRNA, entering the A-site of stalled ribosomes, displacing the stalled mRNA. The ribosome then switches to translate the ORF on the tmRNA; the nascent peptide is terminated with the 'tag peptide' encoded by the tmRNA and targeted for degradation. The ribosome is freed to recommence translation, which seems to be the essential function of trans-translation. This is SsrA-binding protein from Ehrlichia ruminantium (strain Gardel).